The following is a 203-amino-acid chain: High frequency lysogenization protein HflD homolog (203 aa).

It belongs to the HflD family.

Its subcellular location is the cytoplasm. It localises to the cell inner membrane. The sequence is that of High frequency lysogenization protein HflD homolog from Vesicomyosocius okutanii subsp. Calyptogena okutanii (strain HA).